A 367-amino-acid polypeptide reads, in one-letter code: Glutamate 5-kinase (367 aa).

K9 contributes to the ATP binding site. Positions 49, 136, and 148 each coordinate substrate. ATP contacts are provided by residues 168 to 169 (TD) and 210 to 216 (TGGMKSK). The 75-residue stretch at 276-350 (SGQIEVDAGA…GMQSQDIQVR (75 aa)) folds into the PUA domain.

It belongs to the glutamate 5-kinase family.

The protein localises to the cytoplasm. The catalysed reaction is L-glutamate + ATP = L-glutamyl 5-phosphate + ADP. Its pathway is amino-acid biosynthesis; L-proline biosynthesis; L-glutamate 5-semialdehyde from L-glutamate: step 1/2. Functionally, catalyzes the transfer of a phosphate group to glutamate to form L-glutamate 5-phosphate. The chain is Glutamate 5-kinase from Bacillus cereus (strain ATCC 14579 / DSM 31 / CCUG 7414 / JCM 2152 / NBRC 15305 / NCIMB 9373 / NCTC 2599 / NRRL B-3711).